Reading from the N-terminus, the 156-residue chain is Small ribosomal subunit protein uS7 (156 aa).

This sequence belongs to the universal ribosomal protein uS7 family. Part of the 30S ribosomal subunit. Contacts proteins S9 and S11.

One of the primary rRNA binding proteins, it binds directly to 16S rRNA where it nucleates assembly of the head domain of the 30S subunit. Is located at the subunit interface close to the decoding center, probably blocks exit of the E-site tRNA. The polypeptide is Small ribosomal subunit protein uS7 (Desulfitobacterium hafniense (strain DSM 10664 / DCB-2)).